The sequence spans 173 residues: Co-chaperone protein HscB homolog (173 aa).

Positions 5 to 77 (CHFAQFDLQP…PRRALYLLTL (73 aa)) constitute a J domain.

This sequence belongs to the HscB family. As to quaternary structure, interacts with HscA and stimulates its ATPase activity.

Co-chaperone involved in the maturation of iron-sulfur cluster-containing proteins. Seems to help targeting proteins to be folded toward HscA. In Pseudomonas aeruginosa (strain UCBPP-PA14), this protein is Co-chaperone protein HscB homolog.